We begin with the raw amino-acid sequence, 498 residues long: Histidine--tRNA ligase (498 aa).

The protein belongs to the class-II aminoacyl-tRNA synthetase family. Homodimer.

The protein resides in the cytoplasm. The catalysed reaction is tRNA(His) + L-histidine + ATP = L-histidyl-tRNA(His) + AMP + diphosphate + H(+). The sequence is that of Histidine--tRNA ligase from Mycoplasmopsis synoviae (strain 53) (Mycoplasma synoviae).